Consider the following 497-residue polypeptide: Putative aldehyde dehydrogenase AldA (497 aa).

213-219 (GKGSESG) provides a ligand contact to NAD(+). Active-site residues include E257 and C291.

This sequence belongs to the aldehyde dehydrogenase family.

The enzyme catalyses an aldehyde + NAD(+) + H2O = a carboxylate + NADH + 2 H(+). This is Putative aldehyde dehydrogenase AldA (aldA) from Staphylococcus haemolyticus (strain JCSC1435).